The sequence spans 357 residues: MLVLGIETTCDETAAAVVERLPDGSARILSNIVRSQTEEHAPYGGVVPEIAARAHVELLDGLIARAMTESGVGFRQLSGVAAAAGPGLIGGVIVGLTTAKAIALVHGTPLTAVNHLEAHALTPRLTSRLEFPYCLFLASGGHTQIVAVLGVGNYVRLGTTVDDAMGEAFDKVAKMLGLPYPGGPEVERAAASGDATRFNFPRPMLGRPDANFSLSGLKTAVRNEAARIDPLEPRDISDLCAGFQAAVLEATADRLGVGLRLFEERFGRPRALVAAGGVAANQAIRASLEGVAAKARTSLIIPPPALCTDNGAMIAWAGAERLAAGLTDSLETPPRARWLLDANAQAPAGFANTRAGF.

Residues H115 and H119 each contribute to the Fe cation site. Substrate is bound by residues 137 to 141 (LASGG), D170, G183, and N281. D309 provides a ligand contact to Fe cation.

This sequence belongs to the KAE1 / TsaD family. The cofactor is Fe(2+).

It localises to the cytoplasm. The enzyme catalyses L-threonylcarbamoyladenylate + adenosine(37) in tRNA = N(6)-L-threonylcarbamoyladenosine(37) in tRNA + AMP + H(+). Required for the formation of a threonylcarbamoyl group on adenosine at position 37 (t(6)A37) in tRNAs that read codons beginning with adenine. Is involved in the transfer of the threonylcarbamoyl moiety of threonylcarbamoyl-AMP (TC-AMP) to the N6 group of A37, together with TsaE and TsaB. TsaD likely plays a direct catalytic role in this reaction. This chain is tRNA N6-adenosine threonylcarbamoyltransferase, found in Nitrobacter winogradskyi (strain ATCC 25391 / DSM 10237 / CIP 104748 / NCIMB 11846 / Nb-255).